We begin with the raw amino-acid sequence, 130 residues long: MATIQYYGTGRRKEAVARVRLMPGKGNIIINNKSLEEYFPLETLRYTVKQPLILTETIDKFDVYVKVSGGGLSGQAGAIRHGIARALVKADAELRPILKKAGFLTRDPRMKERRKYGLKKARKAPQFSKR.

Residues 109 to 130 (RMKERRKYGLKKARKAPQFSKR) form a disordered region. Residues 111-130 (KERRKYGLKKARKAPQFSKR) are compositionally biased toward basic residues.

The protein belongs to the universal ribosomal protein uS9 family.

In Caldanaerobacter subterraneus subsp. tengcongensis (strain DSM 15242 / JCM 11007 / NBRC 100824 / MB4) (Thermoanaerobacter tengcongensis), this protein is Small ribosomal subunit protein uS9.